Consider the following 463-residue polypeptide: Asparagine--tRNA ligase (463 aa).

Belongs to the class-II aminoacyl-tRNA synthetase family. In terms of assembly, homodimer.

The protein localises to the cytoplasm. The catalysed reaction is tRNA(Asn) + L-asparagine + ATP = L-asparaginyl-tRNA(Asn) + AMP + diphosphate + H(+). This Bacillus thuringiensis subsp. konkukian (strain 97-27) protein is Asparagine--tRNA ligase.